The chain runs to 167 residues: T-cell surface glycoprotein CD3 delta chain (167 aa).

The N-terminal stretch at methionine 1–proline 21 is a signal peptide. At arginine 22–leucine 100 the chain is on the extracellular side. A disulfide bridge connects residues cysteine 37 and cysteine 73. Asparagine 38 and asparagine 55 each carry an N-linked (GlcNAc...) asparagine glycan. The helical transmembrane segment at alanine 101–phenylalanine 121 threads the bilayer. Over alanine 122–lysine 167 the chain is Cytoplasmic. The ITAM domain occupies aspartate 134–lysine 162. Tyrosine 145 and tyrosine 156 each carry phosphotyrosine.

In terms of assembly, the TCR-CD3 complex is composed of a CD3D/CD3E and a CD3G/CD3E heterodimers that preferentially associate with TCRalpha and TCRbeta, respectively, to form TCRalpha/CD3E/CD3G and TCRbeta/CD3G/CD3E trimers. In turn, the hexamer interacts with CD3Z homodimer to form the TCR-CD3 complex. Alternatively, TCRalpha and TCRbeta can be replaced by TCRgamma and TCRdelta. Interacts with coreceptors CD4 and CD8. Post-translationally, phosphorylated on Tyr residues after T-cell receptor triggering by LCK in association with CD4/CD8. As to expression, CD3D is mostly present on T-lymphocytes with its TCR-CD3 partners. Present also in fetal NK-cells.

It is found in the cell membrane. Its function is as follows. Part of the TCR-CD3 complex present on T-lymphocyte cell surface that plays an essential role in adaptive immune response. When antigen presenting cells (APCs) activate T-cell receptor (TCR), TCR-mediated signals are transmitted across the cell membrane by the CD3 chains CD3D, CD3E, CD3G and CD3Z. All CD3 chains contain immunoreceptor tyrosine-based activation motifs (ITAMs) in their cytoplasmic domain. Upon TCR engagement, these motifs become phosphorylated by Src family protein tyrosine kinases LCK and FYN, resulting in the activation of downstream signaling pathways. In addition of this role of signal transduction in T-cell activation, CD3D plays an essential role in thymocyte differentiation. Indeed, participates in correct intracellular TCR-CD3 complex assembly and surface expression. In absence of a functional TCR-CD3 complex, thymocytes are unable to differentiate properly. Interacts with CD4 and CD8 and thus serves to establish a functional link between the TCR and coreceptors CD4 and CD8, which is needed for activation and positive selection of CD4 or CD8 T-cells. The chain is T-cell surface glycoprotein CD3 delta chain (CD3D) from Ovis aries (Sheep).